The primary structure comprises 108 residues: uncharacterized protein (108 aa).

Over residues 48–73 (NSNIPSSSSSSPSFASFFSSTSTSAT) the composition is skewed to low complexity. A disordered region spans residues 48 to 81 (NSNIPSSSSSSPSFASFFSSTSTSATLNGSSNNK).

This is an uncharacterized protein from Dictyostelium discoideum (Social amoeba).